The chain runs to 382 residues: MPQRQPQPAHPVDGIYFGLMSGTSMDGVDGVAVRFEAGRAPVVLAEAFVGFAQSLRDALFALQQPGDNEIDRESLAANALVARYAVCCHELQRTAGLSRDEIRAIGVHGQTVRHRPERGYTRQLNNPALLAELTQVDVIADFRSRDVAAGGHGAPLAPAFHATVFGAPGETRVVCNLGGISNITILPGADGDVRGFDCGPANALIDAWATRHLGKPYDDGGKFAARGTVQASLLGALLDEPYFTAPPPKSTGRDLFNPAWLDARLAAFPQVAPEDVQATLTALTAVSVAREIAQHAPGCKAVFVCGGGARNPVLLDALRHALREAGVPATVDTTAALGVPPQQVEALAFAWLAYRFTARQPGNLATVTGAAGNRVLGALYPR.

22–29 is a binding site for ATP; that stretch reads GTSMDGVD.

It belongs to the anhydro-N-acetylmuramic acid kinase family.

It catalyses the reaction 1,6-anhydro-N-acetyl-beta-muramate + ATP + H2O = N-acetyl-D-muramate 6-phosphate + ADP + H(+). Its pathway is amino-sugar metabolism; 1,6-anhydro-N-acetylmuramate degradation. It participates in cell wall biogenesis; peptidoglycan recycling. In terms of biological role, catalyzes the specific phosphorylation of 1,6-anhydro-N-acetylmuramic acid (anhMurNAc) with the simultaneous cleavage of the 1,6-anhydro ring, generating MurNAc-6-P. Is required for the utilization of anhMurNAc either imported from the medium or derived from its own cell wall murein, and thus plays a role in cell wall recycling. The sequence is that of Anhydro-N-acetylmuramic acid kinase from Burkholderia orbicola (strain AU 1054).